Here is a 168-residue protein sequence, read N- to C-terminus: Group 2 truncated hemoglobin 3-1 (168 aa).

Residue H98 participates in heme b binding.

Belongs to the truncated hemoglobin family. Group II subfamily. As to quaternary structure, homodimer when ferric. In terms of tissue distribution, mainly expressed in root nodules, but barely in leaves, roots, stems, flowers and fruits.

Functionally, hemoglobin-like protein that exhibits an unusual concentration-independent binding of O(2) and CO. Required for general plant development and during nodulation. May promote shoot organogenesis from root explants. This Lotus japonicus (Lotus corniculatus var. japonicus) protein is Group 2 truncated hemoglobin 3-1.